A 235-amino-acid polypeptide reads, in one-letter code: Phosphoribosylaminoimidazole-succinocarboxamide synthase (235 aa).

The protein belongs to the SAICAR synthetase family.

It catalyses the reaction 5-amino-1-(5-phospho-D-ribosyl)imidazole-4-carboxylate + L-aspartate + ATP = (2S)-2-[5-amino-1-(5-phospho-beta-D-ribosyl)imidazole-4-carboxamido]succinate + ADP + phosphate + 2 H(+). Its pathway is purine metabolism; IMP biosynthesis via de novo pathway; 5-amino-1-(5-phospho-D-ribosyl)imidazole-4-carboxamide from 5-amino-1-(5-phospho-D-ribosyl)imidazole-4-carboxylate: step 1/2. The polypeptide is Phosphoribosylaminoimidazole-succinocarboxamide synthase (purC) (Streptococcus pneumoniae serotype 4 (strain ATCC BAA-334 / TIGR4)).